The sequence spans 83 residues: MSPTITRPLIGQLCPLTNVGQIAETFSSEEVSFVETVDPLRHASKGGHHDDDNLPQGTLNNIWRGNPVIAWAALLRIAHKHFR.

The protein operates within secondary metabolite biosynthesis. Functionally, part of the gene cluster that mediates the biosynthesis of aspergillic acid, a hydroxamic acid-containing pyrazinone with aliphatic side chains that originates from leucine (Leu) and isoleucine (Ile). Aspergillic acid has antibiotic properties and was shown to be lethal to mice. The first step in the pathway is the production of deoxyaspergillic acid via a condensation between the Ile amine and the Leu carboxylic acid, followed by a reductive release from the protein forming the dipeptide aldehyde NH(2)-Leu-Ile-CHO, which could undergo an intermolecular cyclization resulting in a dihydropyrazinone. As the NRPS asaC lacks a condensation domain, it is improbable that it is responsible for condensation of Leu and Ile. One possibility is that asaC acts on a previously condensed dipeptide and functions as a Leu-Ile reductase to yield deoxyaspergillic acid. After asaC forms deoxyaspergillic acid, the cytochrome P450 asaD oxidizes the pyrazinone to the hydroxamic acid-containing bioactive metabolite aspergillic acid. The hydroxylase/desaturase asaB can then convert aspergillic acid to hydroxyaspergillic acid. Both aspergillic acid and hydroxyaspergillic acid can form complexes with iron producing ferriaspergillin analogs. This Aspergillus flavus (strain ATCC 200026 / FGSC A1120 / IAM 13836 / NRRL 3357 / JCM 12722 / SRRC 167) protein is Aspergillic acid biosynthesis cluster protein F.